We begin with the raw amino-acid sequence, 346 residues long: Senescence-specific cysteine protease SAG12 (346 aa).

The N-terminal stretch at 1–25 is a signal peptide; it reads MALKHMQIFLFVAIFSSFCFSITLS. An N-linked (GlcNAc...) asparagine glycan is attached at Asn-124. 3 disulfides stabilise this stretch: Cys-151-Cys-192, Cys-185-Cys-225, and Cys-283-Cys-335. Cys-154 is an active-site residue. Residue His-289 is part of the active site. A glycan (N-linked (GlcNAc...) asparagine) is linked at Asn-301. Asn-310 is a catalytic residue.

It belongs to the peptidase C1 family. Found in senescent leaves, especially in senescence-associated vacuoles- (SAVs) containing cells (e.g. mesophyll and guard cells), and in senescencing ovules of unfertilised pistils.

It localises to the vacuole. Its function is as follows. Cysteine protease that may have a developmental senescence specific cell death function during apoptosis, heavy metal detoxification, and hypersensitive response. This Arabidopsis thaliana (Mouse-ear cress) protein is Senescence-specific cysteine protease SAG12.